The primary structure comprises 741 residues: Aspartyl/asparaginyl beta-hydroxylase (741 aa).

Residues 1–54 (MAPRKNAKGGGGNSSSSGSGSGSGSGSPSTGSSGSSSSPGARREAKHGGHKNGR) are disordered. Topologically, residues 1–62 (MAPRKNAKGG…GRRGGISGGS (62 aa)) are cytoplasmic. Gly residues predominate over residues 8–25 (KGGGGNSSSSGSGSGSGS). Residue Ser-15 is modified to Phosphoserine. The segment covering 26–40 (GSPSTGSSGSSSSPG) has biased composition (low complexity). A helical; Signal-anchor for type II membrane protein membrane pass occupies residues 63-83 (FFTWFMVIALLGVWTSVAVVW). At 84 to 741 (FDLVDYEEVL…PQQRRSLPAI (658 aa)) the chain is on the lumenal side. Asp-100, Asp-102, Asp-104, Asp-106, and Asp-111 together coordinate Ca(2+). Disordered stretches follow at residues 120–141 (ERSPSERTFPPEEEAETHAELE) and 222–244 (TASQNHPNDMEEMTNEQENSDPS). Acidic residues predominate over residues 231 to 242 (MEEMTNEQENSD). TPR repeat units lie at residues 324–357 (IKAELDAAEKLRKRGKIEEAVNAFEELVRKYPQS), 365–398 (AQCEDDLAEKQRSNEVLRRAIETYQEAADLPDAP), 437–470 (TTLKNDLGVGYLLLGDNDSAKKVYEEVLNVTPND), 472–504 (FAKVHYGFILKAQNKISESIPYLKEGIESGDPG), and 508–540 (GRFYFHLGDAMQRVGNKEAYKWYELGHKRGHFA). Asn-453 carries an N-linked (GlcNAc...) asparagine glycan. Trp-608 lines the 2-oxoglutarate pocket. Cys-624 and Cys-631 form a disulfide bridge. Ser-651 serves as a coordination point for 2-oxoglutarate. His-662 serves as a coordination point for Fe cation. 671 to 673 (RMH) contributes to the 2-oxoglutarate binding site. N-linked (GlcNAc...) asparagine glycosylation occurs at Asn-689. Residue His-708 participates in Fe cation binding. A 2-oxoglutarate-binding site is contributed by Arg-718.

The protein belongs to the aspartyl/asparaginyl beta-hydroxylase family. In terms of assembly, monomer. Isoform 2 interacts with CASQ2. Fe cation serves as cofactor. In terms of tissue distribution, isoform 1 is detected in heart, liver and ovary (at protein level). Detected in heart ventricle. Isoform 1 is widely expressed. Isoform 2 is detected in heart and skeletal muscle.

The protein resides in the endoplasmic reticulum membrane. It localises to the sarcoplasmic reticulum membrane. The catalysed reaction is L-aspartyl-[protein] + 2-oxoglutarate + O2 = 3-hydroxy-L-aspartyl-[protein] + succinate + CO2. Specifically hydroxylates an Asp or Asn residue in certain epidermal growth factor-like (EGF) domains of a number of proteins. The sequence is that of Aspartyl/asparaginyl beta-hydroxylase (Asph) from Mus musculus (Mouse).